Here is a 703-residue protein sequence, read N- to C-terminus: MAALAAGISKQRAAAQGLGSNQNAVKYLGQDFETLRKQCLNSGVLFKDPEFPACPSALGYRDLGPGSAETQGIIWKRPTELCSNPQFIVGGATRTDIRQGGLGDCWLLAAIASLTLNEKLLYRVVPRDQSFQKNYAGIFHFQFWQYGEWVEVVIDDRLPTKNGQLLFLHSEEGNEFWSALLEKAYAKLNGSYEALAGGSTIEGFEDFTGGISEFYDLRKPPGNLYYTIQKALRKGSLLGCSIDVSNAAEAEATTRQKLVKGHAYSVTGVEEVDFRGLPEKLIRLRNPWGEVEWTGAWSDSAPEWNYIDPQKKGELDKRAEDGEFWMSFSDFLKQFSRLEICNLSPDSLSSEEIHKWNLVLFNGRWTRGSTAGGCQNYPATYWTNPQFKIHLDEVDEDQEEGTSEPCCTVLLGLMQKNRRRQRRIGQGMLSIGYAVYQIPKELENHTDEHLGRDFFQGRQPSTCSSTYMNLREVSSRVQLPPGQYLVVPSTFEPFKDGDFCLRVFSEKKAQALEIGDAVPGDPHEPHPRDMDGEDEHFWSLSEEFADKDSEISAHQLKRVLNGLLSKRTDMKFDGFNINTCREMISLLDGDGTGSLRPVEFKTLWLKICKYLEIYQEMDHSRAGTIDAHEMRTALKKAGFTLNNQVQQTIATRYACSKLGVDFDGFVACMIRLEILFKLFRLLDKDQNGIVQLSLAEWLCRALV.

Residues 45–344 form the Calpain catalytic domain; sequence LFKDPEFPAC…FSRLEICNLS (300 aa). Catalysis depends on residues C105, H262, and N286. A domain III region spans residues 355-512; the sequence is KWNLVLFNGR…VFSEKKAQAL (158 aa). The segment at 513 to 531 is linker; that stretch reads EIGDAVPGDPHEPHPRDMD. EF-hand domains follow at residues 531 to 566, 575 to 610, 605 to 640, and 670 to 703; these read DGEDEHFWSLSEEFADKDSEISAHQLKRVLNGLLSK, FNINTCREMISLLDGDGTGSLRPVEFKTLWLKICKY, LKICKYLEIYQEMDHSRAGTIDAHEMRTALKKAGFT, and IRLEILFKLFRLLDKDQNGIVQLSLAEWLCRALV. The tract at residues 532–703 is domain IV; sequence GEDEHFWSLS…LAEWLCRALV (172 aa). Positions 588, 590, 592, 594, 599, 618, 620, 624, and 629 each coordinate Ca(2+).

The protein belongs to the peptidase C2 family. As to quaternary structure, monomer and homooligomer. Interacts with COPS1/GPS1, COPB1, EYA2, NME2, NME4 and TOMM70. It depends on Ca(2+) as a cofactor. Undergoes autolytic cleavage between Ala-5 and Ala-6 which gives rise to fragments extending from Ala-6 to the C-terminus, Ala-6 to the EF-hand 2 domain and from Ala-6 to the beginning of domain III. In terms of tissue distribution, predominantly expressed in the stomach. Localizes strictly to the surface mucus cells in the gastric epithelium and the mucus-secreting goblet cells in the duodenum.

The protein resides in the cytoplasm. It localises to the golgi apparatus. The catalysed reaction is Broad endopeptidase specificity.. The concentration of calcium for half-maximal activity is 0.3 mM. Inhibited by calpastatin and calpeptin. Functionally, calcium-regulated non-lysosomal thiol-protease. Involved in membrane trafficking in the gastric surface mucus cells (pit cells) and may involve the membrane trafficking of mucus cells via interactions with coat protein. Proteolytically cleaves the beta-subunit of coatomer complex. The polypeptide is Calpain-8 (Capn8) (Mus musculus (Mouse)).